A 353-amino-acid polypeptide reads, in one-letter code: Photosystem II D2 protein (353 aa).

T2 is subject to N-acetylthreonine. T2 is subject to Phosphothreonine. Residues 41–61 form a helical membrane-spanning segment; sequence CAYFALGGWLTGTTFVTSWYT. Chlorophyll a is bound at residue H118. The chain crosses the membrane as a helical span at residues 125-141; sequence GFMLRQFEIARSVGLRP. Pheophytin a is bound by residues Q130 and N143. Residues 153–166 traverse the membrane as a helical segment; sequence VFVSVFLIYPLGQS. Residue H198 participates in chlorophyll a binding. The helical transmembrane segment at 208–228 threads the bilayer; the sequence is AALLCAIHGATVENTIFEDGD. A plastoquinone-binding residues include H215 and F262. Residue H215 participates in Fe cation binding. Position 269 (H269) interacts with Fe cation. The chain crosses the membrane as a helical span at residues 279-295; the sequence is GLWMSAIGVVGLALNLR.

The protein belongs to the reaction center PufL/M/PsbA/D family. PSII is composed of 1 copy each of membrane proteins PsbA, PsbB, PsbC, PsbD, PsbE, PsbF, PsbH, PsbI, PsbJ, PsbK, PsbL, PsbM, PsbT, PsbX, PsbY, PsbZ, Psb30/Ycf12, at least 3 peripheral proteins of the oxygen-evolving complex and a large number of cofactors. It forms dimeric complexes. The cofactor is The D1/D2 heterodimer binds P680, chlorophylls that are the primary electron donor of PSII, and subsequent electron acceptors. It shares a non-heme iron and each subunit binds pheophytin, quinone, additional chlorophylls, carotenoids and lipids. There is also a Cl(-1) ion associated with D1 and D2, which is required for oxygen evolution. The PSII complex binds additional chlorophylls, carotenoids and specific lipids..

Its subcellular location is the plastid. The protein localises to the chloroplast thylakoid membrane. The enzyme catalyses 2 a plastoquinone + 4 hnu + 2 H2O = 2 a plastoquinol + O2. Functionally, photosystem II (PSII) is a light-driven water:plastoquinone oxidoreductase that uses light energy to abstract electrons from H(2)O, generating O(2) and a proton gradient subsequently used for ATP formation. It consists of a core antenna complex that captures photons, and an electron transfer chain that converts photonic excitation into a charge separation. The D1/D2 (PsbA/PsbD) reaction center heterodimer binds P680, the primary electron donor of PSII as well as several subsequent electron acceptors. D2 is needed for assembly of a stable PSII complex. The chain is Photosystem II D2 protein from Staurastrum punctulatum (Green alga).